Reading from the N-terminus, the 526-residue chain is Bifunctional purine biosynthesis protein PurH (526 aa).

In terms of domain architecture, MGS-like spans 1 to 145 (MIRTALLSVS…KNHQDVTVLI (145 aa)).

This sequence belongs to the PurH family.

It catalyses the reaction (6R)-10-formyltetrahydrofolate + 5-amino-1-(5-phospho-beta-D-ribosyl)imidazole-4-carboxamide = 5-formamido-1-(5-phospho-D-ribosyl)imidazole-4-carboxamide + (6S)-5,6,7,8-tetrahydrofolate. The enzyme catalyses IMP + H2O = 5-formamido-1-(5-phospho-D-ribosyl)imidazole-4-carboxamide. Its pathway is purine metabolism; IMP biosynthesis via de novo pathway; 5-formamido-1-(5-phospho-D-ribosyl)imidazole-4-carboxamide from 5-amino-1-(5-phospho-D-ribosyl)imidazole-4-carboxamide (10-formyl THF route): step 1/1. It functions in the pathway purine metabolism; IMP biosynthesis via de novo pathway; IMP from 5-formamido-1-(5-phospho-D-ribosyl)imidazole-4-carboxamide: step 1/1. The chain is Bifunctional purine biosynthesis protein PurH from Polynucleobacter necessarius subsp. necessarius (strain STIR1).